Here is an 803-residue protein sequence, read N- to C-terminus: Na(+)/H(+) antiporter subunit A1 (803 aa).

19 helical membrane passes run 1–21, 30–50, 79–99, 117–137, 166–186, 208–228, 265–285, 300–320, 337–357, 377–397, 427–447, 472–492, 522–542, 591–611, 621–641, 646–666, 671–691, 707–727, and 764–784; these read MSLL…IPIL, LGWF…SLIS, LSIL…LYSI, LFMG…LYLF, LIIT…ISLA, FIFA…QVPF, LFAI…ITLF, ILAF…GIGA, FTAA…LFMI, LTIM…MAGI, LGIV…VYSI, ILML…GLFP, GITP…LLLL, LVII…SVPF, IHIY…MVVI, LFSV…FVFF, LALT…LCFY, LTNA…GLIA, and MDTL…YTMI.

Belongs to the CPA3 antiporters (TC 2.A.63) subunit A family. May form a heterooligomeric complex that consists of seven subunits: mnhA1, mnhB1, mnhC1, mnhD1, mnhE1, mnhF1 and mnhG1.

The protein localises to the cell membrane. Mnh complex is a Na(+)/H(+) antiporter involved in Na(+) excretion. In Staphylococcus haemolyticus (strain JCSC1435), this protein is Na(+)/H(+) antiporter subunit A1 (mnhA1).